The chain runs to 255 residues: ATP synthase subunit a 2 (255 aa).

5 helical membrane passes run 24–44 (WFGI…VFIL), 86–106 (LIGP…AVDL), 131–151 (DINI…GYTF), 205–225 (MIFI…SVPW), and 226–246 (ALFH…LTVV).

It belongs to the ATPase A chain family. As to quaternary structure, F-type ATPases have 2 components, CF(1) - the catalytic core - and CF(0) - the membrane proton channel. CF(1) has five subunits: alpha(3), beta(3), gamma(1), delta(1), epsilon(1). CF(0) has three main subunits: a(1), b(2) and c(9-12). The alpha and beta chains form an alternating ring which encloses part of the gamma chain. CF(1) is attached to CF(0) by a central stalk formed by the gamma and epsilon chains, while a peripheral stalk is formed by the delta and b chains.

It is found in the cell inner membrane. Functionally, key component of the proton channel; it plays a direct role in the translocation of protons across the membrane. The polypeptide is ATP synthase subunit a 2 (Vibrio campbellii (strain ATCC BAA-1116)).